The following is a 324-amino-acid chain: Beta-ketoacyl-[acyl-carrier-protein] synthase III (324 aa).

Residues cysteine 112 and histidine 249 contribute to the active site. The ACP-binding stretch occupies residues 250–254 (QANRR). Asparagine 279 is an active-site residue.

Belongs to the thiolase-like superfamily. FabH family. In terms of assembly, homodimer.

Its subcellular location is the cytoplasm. It catalyses the reaction malonyl-[ACP] + acetyl-CoA + H(+) = 3-oxobutanoyl-[ACP] + CO2 + CoA. It participates in lipid metabolism; fatty acid biosynthesis. In terms of biological role, catalyzes the condensation reaction of fatty acid synthesis by the addition to an acyl acceptor of two carbons from malonyl-ACP. Catalyzes the first condensation reaction which initiates fatty acid synthesis and may therefore play a role in governing the total rate of fatty acid production. Possesses both acetoacetyl-ACP synthase and acetyl transacylase activities. Its substrate specificity determines the biosynthesis of branched-chain and/or straight-chain of fatty acids. This is Beta-ketoacyl-[acyl-carrier-protein] synthase III from Streptococcus equi subsp. zooepidemicus (strain H70).